We begin with the raw amino-acid sequence, 997 residues long: P3N-PIPO polyprotein (997 aa).

In terms of domain architecture, Peptidase S30 spans 173–313 (IVCVDDVNNL…VLFYSDVEHY (141 aa)). Residues Glu235 and Ser267 each act as for P1 proteinase activity in the active site. Positions 365-368 (KLSC) match the Involved in interaction with stylet and aphid transmission motif. The short motif at 621–623 (PTK) is the Involved in virions binding and aphid transmission element. The region spanning 647–769 (MYIAKEGYCY…QSEMKHYRVG (123 aa)) is the Peptidase C6 domain. Catalysis depends on for helper component proteinase activity residues Cys655 and His728.

This sequence belongs to the potyviridae P3N-PIPO polyprotein family. Interacts (via PIPO domain) with host PCaP1 protein; this interaction may help to anchor the movement complex to the plasma membrane from which the complex could move to the plasmodesmata. In terms of processing, potyviral RNA is expressed as two polyproteins which undergo post-translational proteolytic processing. Genome polyprotein is processed by NIa-pro, P1 and HC-pro proteinases resulting in the production of at least ten individual proteins. P3N-PIPO is cleaved by P1 and HC-pro proteinases resulting in the production of three individual proteins. The P1 proteinase and the HC-pro cleave only their respective C-termini autocatalytically.

It is found in the host cell junction. Its subcellular location is the host plasmodesma. The enzyme catalyses Hydrolyzes a Gly-|-Gly bond at its own C-terminus, commonly in the sequence -Tyr-Xaa-Val-Gly-|-Gly, in the processing of the potyviral polyprotein.. Its function is as follows. Required for aphid transmission and also has proteolytic activity. Only cleaves a Gly-Gly dipeptide at its own C-terminus. Interacts with virions and aphid stylets. Acts as a suppressor of RNA-mediated gene silencing, also known as post-transcriptional gene silencing (PTGS), a mechanism of plant viral defense that limits the accumulation of viral RNAs. May have RNA-binding activity. Functionally, allows efficient cell to cell propagation, by bypassing the host cell wall barrier. Transports viral genome to neighboring plant cells directly through plasmosdesmata, without any budding. The sequence is that of P3N-PIPO polyprotein from Citrullus lanatus (Watermelon).